The primary structure comprises 387 residues: Na(+)/H(+)-K(+) antiporter GerN (387 aa).

The next 11 helical transmembrane spans lie at 29–49 (PSVL…LGWI), 54–74 (LLTQ…GLET), 87–107 (LAVA…SGLV), 114–134 (NAVF…VQTL), 149–169 (LGAA…AMSF), 175–195 (VNLT…ILIG), 219–239 (ALII…AGII), 263–283 (PIAY…NITF), 290–310 (IWFI…GCGF), 324–344 (IIGA…GTGL), and 347–367 (GLLA…TTMI).

This sequence belongs to the monovalent cation:proton antiporter 2 (CPA2) transporter (TC 2.A.37) family.

Its subcellular location is the membrane. Na(+)/H(+) antiporter that extrudes sodium in exchange for external protons. Can also use potassium as a coupling ion, without completely replacing H(+). This Na(+)/H(+)-K(+) antiport is much more rapid than Na(+)/H(+) antiport. Can also extrude lithium. Important for the inosine-dependent germination of spores. The sequence is that of Na(+)/H(+)-K(+) antiporter GerN (gerN) from Bacillus cereus.